We begin with the raw amino-acid sequence, 482 residues long: tRNA sulfurtransferase (482 aa).

A THUMP domain is found at 61-165 (DLVRDALTRI…DDRLLLVRGR (105 aa)). Residues 183–184 (LI), K265, G287, and Q296 contribute to the ATP site. C344 and C456 are disulfide-bonded. Residues 404-482 (LAEGDVVLDI…GYDNVRVYRP (79 aa)) enclose the Rhodanese domain. C456 (cysteine persulfide intermediate) is an active-site residue.

The protein belongs to the ThiI family.

It is found in the cytoplasm. It catalyses the reaction [ThiI sulfur-carrier protein]-S-sulfanyl-L-cysteine + a uridine in tRNA + 2 reduced [2Fe-2S]-[ferredoxin] + ATP + H(+) = [ThiI sulfur-carrier protein]-L-cysteine + a 4-thiouridine in tRNA + 2 oxidized [2Fe-2S]-[ferredoxin] + AMP + diphosphate. The enzyme catalyses [ThiS sulfur-carrier protein]-C-terminal Gly-Gly-AMP + S-sulfanyl-L-cysteinyl-[cysteine desulfurase] + AH2 = [ThiS sulfur-carrier protein]-C-terminal-Gly-aminoethanethioate + L-cysteinyl-[cysteine desulfurase] + A + AMP + 2 H(+). It functions in the pathway cofactor biosynthesis; thiamine diphosphate biosynthesis. Its function is as follows. Catalyzes the ATP-dependent transfer of a sulfur to tRNA to produce 4-thiouridine in position 8 of tRNAs, which functions as a near-UV photosensor. Also catalyzes the transfer of sulfur to the sulfur carrier protein ThiS, forming ThiS-thiocarboxylate. This is a step in the synthesis of thiazole, in the thiamine biosynthesis pathway. The sulfur is donated as persulfide by IscS. The sequence is that of tRNA sulfurtransferase from Edwardsiella ictaluri (strain 93-146).